Here is a 123-residue protein sequence, read N- to C-terminus: MRAQRGLILLLLLLAVFCSTAVSLTCYHCFQPVVSSCNMNSTCSPDQDSCLYAVAGMQVYQRCWKQSDCHGEIIMDQLEETKLKFRCCQFNLCNKSDGSLGKTPLLGTSVLVAILNLCFLSHL.

Positions 1 to 23 (MRAQRGLILLLLLLAVFCSTAVS) are cleaved as a signal peptide. The 73-residue stretch at 24 to 96 (LTCYHCFQPV…CCQFNLCNKS (73 aa)) folds into the UPAR/Ly6 domain. 5 cysteine pairs are disulfide-bonded: cysteine 26-cysteine 50, cysteine 29-cysteine 37, cysteine 43-cysteine 63, cysteine 69-cysteine 87, and cysteine 88-cysteine 93. The N-linked (GlcNAc...) asparagine glycan is linked to asparagine 40. An N-linked (GlcNAc...) asparagine glycan is attached at asparagine 94. Positions 97–123 (DGSLGKTPLLGTSVLVAILNLCFLSHL) are cleaved as a propeptide — removed in mature form.

Interacts with T-cell surface antigen CD2. Post-translationally, N- and O-glycosylated. In terms of tissue distribution, expressed in all tissues examined (liver, kidney, spleen, thymus, brain and heart). Low levels in thymus. Also expressed in mononuclear cells, erythrocytes and platelets. Barely detected in neutrophils.

It localises to the cell membrane. The protein localises to the secreted. In terms of biological role, potent inhibitor of the complement membrane attack complex (MAC) action, which protects self-cells from damage during complement activation. Acts by binding to the beta-haipins of C8 (C8A and C8B) components of the assembling MAC, forming an intermolecular beta-sheet that prevents incorporation of the multiple copies of C9 required for complete formation of the osmolytic pore. The chain is CD59A glycoprotein from Mus musculus (Mouse).